We begin with the raw amino-acid sequence, 347 residues long: Adenine deaminase (347 aa).

Zn(2+)-binding residues include His16, His18, and His204. Glu207 serves as the catalytic Proton donor. Asp285 lines the Zn(2+) pocket. Asp286 provides a ligand contact to substrate.

Belongs to the metallo-dependent hydrolases superfamily. Adenosine and AMP deaminases family. Adenine deaminase type 2 subfamily. It depends on Zn(2+) as a cofactor.

It is found in the cytoplasm. The protein localises to the nucleus. It carries out the reaction adenine + H2O + H(+) = hypoxanthine + NH4(+). Functionally, catalyzes the hydrolytic deamination of adenine to hypoxanthine. Plays an important role in the purine salvage pathway and in nitrogen catabolism. This is Adenine deaminase from Candida glabrata (strain ATCC 2001 / BCRC 20586 / JCM 3761 / NBRC 0622 / NRRL Y-65 / CBS 138) (Yeast).